We begin with the raw amino-acid sequence, 585 residues long: A-type ATP synthase subunit A (585 aa).

231–238 (GPFGSGKT) is a binding site for ATP.

Belongs to the ATPase alpha/beta chains family. Has multiple subunits with at least A(3), B(3), C, D, E, F, H, I and proteolipid K(x).

It localises to the cell membrane. It catalyses the reaction ATP + H2O + 4 H(+)(in) = ADP + phosphate + 5 H(+)(out). Component of the A-type ATP synthase that produces ATP from ADP in the presence of a proton gradient across the membrane. The A chain is the catalytic subunit. This Thermococcus onnurineus (strain NA1) protein is A-type ATP synthase subunit A.